The sequence spans 288 residues: Large ribosomal subunit protein uL2 (288 aa).

Positions 232–265 (GTAMNPVDHPHGGGEGKTKGKHPESPWGWKTKGY) are disordered. The span at 239-255 (DHPHGGGEGKTKGKHPE) shows a compositional bias: basic and acidic residues.

This sequence belongs to the universal ribosomal protein uL2 family. Part of the 50S ribosomal subunit. Forms a bridge to the 30S subunit in the 70S ribosome.

Functionally, one of the primary rRNA binding proteins. Required for association of the 30S and 50S subunits to form the 70S ribosome, for tRNA binding and peptide bond formation. It has been suggested to have peptidyltransferase activity; this is somewhat controversial. Makes several contacts with the 16S rRNA in the 70S ribosome. This is Large ribosomal subunit protein uL2 from Hydrogenobaculum sp. (strain Y04AAS1).